The primary structure comprises 188 residues: Single-stranded DNA-binding protein DdrB (188 aa).

The segment at 140–188 (YAVPGGAAGNGQGRPAPQGQPAQARPQATAARPAARPPVQPGQEEETPF) is disordered. Over residues 152 to 173 (GRPAPQGQPAQARPQATAARPA) the composition is skewed to low complexity.

Homopentamer arranged in a ring-structure; DNA binds between subunits and along the top of the ring. The pentamers self-associate to coat ssDNA in higher-ordered structures; oligomerization facilitates the assembly of extended nucleoprotein complexes. Self-assembly does not however require ssDNA-binding. Interacts with SSB.

Functionally, ssDNA-binding protein that contributes to the ionizing radiation resistance of D.radiodurans. Plays a role in DNA repair and genome reconstitution in a RecA-independent process. Required for recovery from severe genomic fragmentation as a result of exposure to severe levels of ionizing radiation. Binds ssDNA but not dsDNA. Stimulates annealing of complementary ssDNA. Does not complement an ssb disruption. This Deinococcus radiodurans (strain ATCC 13939 / DSM 20539 / JCM 16871 / CCUG 27074 / LMG 4051 / NBRC 15346 / NCIMB 9279 / VKM B-1422 / R1) protein is Single-stranded DNA-binding protein DdrB (ddrB).